We begin with the raw amino-acid sequence, 193 residues long: CD70 antigen (193 aa).

Residues Met1–Cys17 are Cytoplasmic-facing. The helical; Signal-anchor for type II membrane protein transmembrane segment at Val18–Ile38 threads the bilayer. Topologically, residues Gln39–Pro193 are extracellular. Residues Asp56–Val191 form the THD domain. An N-linked (GlcNAc...) asparagine glycan is attached at Asn63. 2 cysteine pairs are disulfide-bonded: Cys115/Cys151 and Cys133/Cys168. N-linked (GlcNAc...) asparagine glycosylation occurs at Asn170.

This sequence belongs to the tumor necrosis factor family. Homotrimer. Post-translationally, N-glycosylated.

Its subcellular location is the cell membrane. In terms of biological role, expressed at the plasma membrane of B cells, it is the ligand of the CD27 receptor which is specifically expressed at the surface of T cells. The CD70-CD27 signaling pathway mediates antigen-specific T cell activation and expansion which in turn provides immune surveillance of B cells. The chain is CD70 antigen from Homo sapiens (Human).